Here is a 468-residue protein sequence, read N- to C-terminus: UDP-N-acetylmuramate--L-alanine ligase (468 aa).

107–113 (GTHGKTT) contributes to the ATP binding site.

This sequence belongs to the MurCDEF family.

It is found in the cytoplasm. The enzyme catalyses UDP-N-acetyl-alpha-D-muramate + L-alanine + ATP = UDP-N-acetyl-alpha-D-muramoyl-L-alanine + ADP + phosphate + H(+). It functions in the pathway cell wall biogenesis; peptidoglycan biosynthesis. In terms of biological role, cell wall formation. In Roseiflexus sp. (strain RS-1), this protein is UDP-N-acetylmuramate--L-alanine ligase.